A 287-amino-acid polypeptide reads, in one-letter code: Cyclopropane mycolic acid synthase MmaA2 (287 aa).

S-adenosyl-L-methionine is bound by residues 33 to 34 (YS), 72 to 74 (GCG), 94 to 99 (TLSKNQ), 123 to 124 (WE), and Ile136. The active site involves Cys269.

This sequence belongs to the CFA/CMAS family.

The catalysed reaction is a 1-acyl-2-(9Z)-enoyl-sn-glycero-3-phospholipid + S-adenosyl-L-methionine = a 1-acyl-2-(9-cyclopronane)-acyl-sn-glycero-3-phospholipid + S-adenosyl-L-homocysteine + H(+). Its pathway is lipid metabolism; mycolic acid biosynthesis. Its function is as follows. Catalyzes the conversion of a double bond to a cis cyclopropane ring at the distal position of an alpha mycolic acid via the transfer of a methylene group from S-adenosyl-L-methionine. MmaA2 also catalyzes the biosynthesis of the cis-cyclopropanated methoxymycolates. Cyclopropanated mycolic acids are key factors participating in cell envelope permeability, host immunomodulation and persistence. The sequence is that of Cyclopropane mycolic acid synthase MmaA2 (cmaC) from Mycobacterium bovis (strain ATCC BAA-935 / AF2122/97).